We begin with the raw amino-acid sequence, 88 residues long: MGSVMMKIRVMPSDVDVDLNEVLEKIKNIQMEGVEIRDSAIQPIAFGLKAIVLMAVMPDMEGIGDRYIEEIGKIEGVESVEIEDMELL.

This sequence belongs to the EF-1-beta/EF-1-delta family.

In terms of biological role, promotes the exchange of GDP for GTP in EF-1-alpha/GDP, thus allowing the regeneration of EF-1-alpha/GTP that could then be used to form the ternary complex EF-1-alpha/GTP/AAtRNA. The sequence is that of Elongation factor 1-beta (ef1b) from Archaeoglobus fulgidus (strain ATCC 49558 / DSM 4304 / JCM 9628 / NBRC 100126 / VC-16).